The chain runs to 583 residues: Peptidyl-prolyl cis-trans isomerase FKBP10 (583 aa).

A signal peptide spans 1–27; that stretch reads MLRAGPPSHTLLRLPLLQLLLLLLVQA. PPIase FKBP-type domains lie at 63-151, 175-263, 287-375, and 400-487; these read GDFV…LDVW, SDFV…IDVH, GDFM…IDFH, and GDFV…VSRE. N-linked (GlcNAc...) asparagine glycans are attached at residues Asn71, Asn183, and Asn295. 2 EF-hand domains span residues 498-533 and 543-578; these read WHED…QVSE and DPEK…DQDR. Positions 511, 513, 515, 517, 522, 556, 558, 560, 562, and 567 each coordinate Ca(2+). The interval 534 to 583 is disordered; the sequence is GKGRLLPGQDPEKTIGDMFQNQDRNQDGKITAEELKLKSDEDQDRVHEEL. Positions 557–583 are enriched in basic and acidic residues; sequence RNQDGKITAEELKLKSDEDQDRVHEEL. The Prevents secretion from ER motif lies at 580–583; the sequence is HEEL.

In terms of processing, glycosylated and phosphorylated.

It is found in the endoplasmic reticulum lumen. It catalyses the reaction [protein]-peptidylproline (omega=180) = [protein]-peptidylproline (omega=0). Its activity is regulated as follows. Inhibited by both FK506 and rapamycin, but not by cyclosporin A. In terms of biological role, PPIases accelerate the folding of proteins during protein synthesis. The sequence is that of Peptidyl-prolyl cis-trans isomerase FKBP10 (FKBP10) from Bos taurus (Bovine).